The following is a 630-amino-acid chain: DELLA protein DWARF8 (630 aa).

The segment at 1-35 (MKREYQDAGGSGGDMGSSKDKMMAAAAGAGEQEEE) is disordered. A DELLA motif motif is present at residues 38 to 42 (DELLA). Residues 161–222 (PIPSPVAAPS…AAPPATQASA (62 aa)) form a disordered region. Low complexity-rich tracts occupy residues 165 to 176 (PVAAPSADPSTD) and 191 to 222 (TSSS…QASA). Residues 234–623 (VDTQEAGIRL…RPLIATSAWR (390 aa)) form the GRAS domain. The segment at 241–297 (IRLVHALLACAEAVQQENFSAAEALVKQIPMLASSQGGAMRKVAAYFGEALARRVYR) is leucine repeat I (LRI). A LxCxE motif motif is present at residues 248 to 252 (LACAE). Positions 316-381 (HAHFYESCPY…GGPPSFRLTG (66 aa)) are VHIID. Residues 347–351 (VHVVD) carry the VHIID motif. The tract at residues 395 to 427 (QVGWKLAQFAHTIRVDFQYRGLVAATLADLEPF) is leucine repeat II (LRII). Residues 443–544 (IAVNSVFELH…EVYLGRQICN (102 aa)) are PFYRE. The short motif at 451–455 (LHRLL) is the LXXLL motif element. The interval 547–623 (ACEGAERTER…RPLIATSAWR (77 aa)) is SAW.

The protein belongs to the GRAS family. DELLA subfamily. Post-translationally, phosphorylated. Ubiquitinated. Upon GA application it is ubiquitinated, leading to its subsequent degradation.

It is found in the nucleus. Probable transcriptional regulator that acts as a repressor of the gibberellin (GA) signaling pathway. Probably acts by participating in large multiprotein complexes that repress transcription of GA-inducible genes. Upon GA application, it is degraded by the proteasome, allowing the GA signaling pathway. The sequence is that of DELLA protein DWARF8 (D8) from Zea mays (Maize).